The following is a 770-amino-acid chain: Potassium transporter 25 (770 aa).

Over 1–23 (MDLEAAHGAAAAPGKRRRRARES) the chain is Cytoplasmic. Residues 24 to 44 (WGASLLLAYQSLGVVYGDVAT) form a helical membrane-spanning segment. The Extracellular portion of the chain corresponds to 45 to 70 (SPLYVYKSAFAGDDIQHSAGNEEIYG). A helical transmembrane segment spans residues 71–91 (VLSFVFWTLTLISLVKYVLIV). Over 92–152 (LRADDGGEGG…MLERYRVLQR (61 aa)) the chain is Cytoplasmic. The helical transmembrane segment at 153–173 (LLLLFALLGTCMVIGDGVLTP) threads the bilayer. Residues 174 to 194 (AVSVYSAVSGLELSMEHEHHK) are Extracellular-facing. A helical transmembrane segment spans residues 195–215 (YVQLPVTCAILIGLFALQHYG). Over 216–218 (THR) the chain is Cytoplasmic. Residues 219–239 (VGFIFAPIVCVWLLCISAIGV) traverse the membrane as a helical segment. Residues 240–267 (YNIVHWNHHVYRALSPYYMYQFLKKTQT) are Extracellular-facing. The chain crosses the membrane as a helical span at residues 268–288 (GGWMSLGGILLCVTGSEAMYA). Residues 289–299 (DLGHFSQSSIK) lie on the Cytoplasmic side of the membrane. The chain crosses the membrane as a helical span at residues 300 to 320 (IAFMSVVYPALVLAYMGQAAY). At 321 to 346 (ISQHHSFENAYHIGFYVSVPEKLRWP) the chain is on the extracellular side. Residues 347–367 (VLVIAILAAVVGSQAVITGTF) traverse the membrane as a helical segment. The Cytoplasmic portion of the chain corresponds to 368–394 (SIIKQCSSLSCFPGVKIVHTSSTVHGQ). The helical transmembrane segment at 395-415 (IYIPEINWILMILCLAVTLGF) threads the bilayer. Over 416–425 (RNTKHLANAQ) the chain is Extracellular. The chain crosses the membrane as a helical span at residues 426-446 (GLAVITVMLVTTCLMSLVIVL). Over 447–451 (CWNKS) the chain is Cytoplasmic. Residues 452–472 (IFLALGFLIFFGTIEVLYFSA) form a helical membrane-spanning segment. Topologically, residues 473–479 (SLVKFHE) are extracellular. Residues 480–500 (GAWVPITLSFIFMIVMCVWHY) traverse the membrane as a helical segment. Residues 501–770 (GTIKKYEFDF…TLEVGMVYQV (270 aa)) lie on the Cytoplasmic side of the membrane.

This sequence belongs to the HAK/KUP transporter (TC 2.A.72.3) family.

The protein localises to the membrane. High-affinity potassium transporter. The sequence is that of Potassium transporter 25 (HAK25) from Oryza sativa subsp. japonica (Rice).